Consider the following 614-residue polypeptide: Zinc finger protein ztf-7 (614 aa).

Residues 1–10 show a composition bias toward gly residues; sequence MSTSGSGGGN. Residues 1–160 form a disordered region; that stretch reads MSTSGSGGGN…SRPKKPEKMS (160 aa). Residues 18 to 41 are compositionally biased toward polar residues; sequence NVASSPNANPKKNADTESSGGSKN. The segment covering 54-69 has biased composition (low complexity); sequence GSNSRNGSRTNSVSNS. Basic and acidic residues predominate over residues 74–83; that stretch reads NRKDWTDRKS. The span at 132–150 shows a compositional bias: acidic residues; it reads DYSDEYELDEPFSDSDDED. 2 consecutive C2H2-type zinc fingers follow at residues 356–380 and 447–470; these read NECI…KRNH and VVCL…KTTH.

Belongs to the ZNF277 family. As to quaternary structure, interacts with rps-2.

It is found in the cytoplasm. Functionally, probable transcription factor. Limits the ability to tolerate cold environment or cold-warm stress. In complex with rps-2, mediates the cold-warm shock response by promoting translocation of components of the RNA exosome from the nucleolus to nucleoplasm. In Caenorhabditis elegans, this protein is Zinc finger protein ztf-7.